Reading from the N-terminus, the 128-residue chain is Large ribosomal subunit protein bL12 (128 aa).

The tract at residues 97-128 (GAPSTLKEGVSKEDAEEAKKQLTEAGATVEVK) is disordered. The span at 105-118 (GVSKEDAEEAKKQL) shows a compositional bias: basic and acidic residues.

This sequence belongs to the bacterial ribosomal protein bL12 family. As to quaternary structure, homodimer. Part of the ribosomal stalk of the 50S ribosomal subunit. Forms a multimeric L10(L12)X complex, where L10 forms an elongated spine to which 2 to 4 L12 dimers bind in a sequential fashion. Binds GTP-bound translation factors.

Functionally, forms part of the ribosomal stalk which helps the ribosome interact with GTP-bound translation factors. Is thus essential for accurate translation. The chain is Large ribosomal subunit protein bL12 from Lawsonia intracellularis (strain PHE/MN1-00).